The primary structure comprises 484 residues: Carbohydrate sulfotransferase 7 (484 aa).

Residues 1–12 lie on the Cytoplasmic side of the membrane; that stretch reads MKGRRRRRREYC. Residues 13-33 form a helical; Signal-anchor for type II membrane protein membrane-spanning segment; sequence KFTLLLALYTLLLLLVPSVLD. The Lumenal portion of the chain corresponds to 34–484; the sequence is SHSEQDKGRN…PLETKANWAV (451 aa). Residues 71-90 form a disordered region; it reads RSLAEGNPDRSPGSPGNLSA. Asn87 is a glycosylation site (N-linked (GlcNAc...) asparagine). A 3'-phosphoadenylyl sulfate-binding site is contributed by 108–114; that stretch reads WRTGSSF. Asn184 carries N-linked (GlcNAc...) asparagine glycosylation. Residue 276–284 coordinates 3'-phosphoadenylyl sulfate; it reads RDPRAVHNS. Asn405 is a glycosylation site (N-linked (GlcNAc...) asparagine). At Ser460 the chain carries Phosphoserine. A compositionally biased stretch (basic and acidic residues) spans 460–473; the sequence is SGDERDRKTVREGE. A disordered region spans residues 460–484; sequence SGDERDRKTVREGETPLETKANWAV.

It belongs to the sulfotransferase 1 family. Gal/GlcNAc/GalNAc subfamily. As to expression, widely expressed. Highly expressed in kidney. Expressed at lower level in heart, lung and liver.

The protein localises to the golgi apparatus membrane. It catalyses the reaction chondroitin beta-D-glucuronate + n 3'-phosphoadenylyl sulfate = chondroitin 6'-sulfate + n adenosine 3',5'-bisphosphate + n H(+). Its function is as follows. Sulfotransferase that utilizes 3'-phospho-5'-adenylyl sulfate (PAPS) as sulfonate donor to catalyze the transfer of sulfate to position 6 of non-reducing N-acetylglucosamine (GlcNAc) residues. Preferentially acts on mannose-linked GlcNAc. Also able to catalyze the transfer of sulfate to position 6 of the N-acetylgalactosamine (GalNAc) residue of chondroitin. Also acts on core 2 mucin-type oligosaccharide and N-acetyllactosamine oligomer with a lower efficiency. Has weak or no activity toward keratan sulfate and oligosaccharides containing the Galbeta1-4GlcNAc. Catalyzes 6-O-sulfation of beta-benzyl GlcNAc but not alpha- or beta-benzyl GalNAc. This chain is Carbohydrate sulfotransferase 7 (Chst7), found in Mus musculus (Mouse).